We begin with the raw amino-acid sequence, 151 residues long: Small ribosomal subunit protein uS15 (151 aa).

This sequence belongs to the universal ribosomal protein uS15 family. As to quaternary structure, component of the small ribosomal subunit. Part of the small subunit (SSU) processome, composed of more than 70 proteins and the RNA chaperone small nucleolar RNA (snoRNA) U3.

It is found in the cytoplasm. It localises to the nucleus. The protein resides in the nucleolus. Component of the small ribosomal subunit. The ribosome is a large ribonucleoprotein complex responsible for the synthesis of proteins in the cell. Part of the small subunit (SSU) processome, first precursor of the small eukaryotic ribosomal subunit. During the assembly of the SSU processome in the nucleolus, many ribosome biogenesis factors, an RNA chaperone and ribosomal proteins associate with the nascent pre-rRNA and work in concert to generate RNA folding, modifications, rearrangements and cleavage as well as targeted degradation of pre-ribosomal RNA by the RNA exosome. The sequence is that of Small ribosomal subunit protein uS15 (rps-13) from Caenorhabditis elegans.